The chain runs to 308 residues: Glycine--tRNA ligase alpha subunit (308 aa).

The protein belongs to the class-II aminoacyl-tRNA synthetase family. As to quaternary structure, tetramer of two alpha and two beta subunits.

The protein resides in the cytoplasm. It carries out the reaction tRNA(Gly) + glycine + ATP = glycyl-tRNA(Gly) + AMP + diphosphate. The polypeptide is Glycine--tRNA ligase alpha subunit (Polaromonas naphthalenivorans (strain CJ2)).